We begin with the raw amino-acid sequence, 312 residues long: L-lactate dehydrogenase (312 aa).

Valine 14, aspartate 35, and tyrosine 66 together coordinate NAD(+). Substrate is bound by residues glutamine 83, arginine 90, and 122–125 (NPVD). Residues 120-122 (ASN) and serine 145 each bind NAD(+). A substrate-binding site is contributed by 150 to 153 (DSAR). Histidine 177 serves as the catalytic Proton acceptor. A Phosphotyrosine modification is found at tyrosine 220. A substrate-binding site is contributed by threonine 229.

Belongs to the LDH/MDH superfamily. LDH family. Homotetramer.

It localises to the cytoplasm. The enzyme catalyses (S)-lactate + NAD(+) = pyruvate + NADH + H(+). Its pathway is fermentation; pyruvate fermentation to lactate; (S)-lactate from pyruvate: step 1/1. Functionally, catalyzes the conversion of lactate to pyruvate. This chain is L-lactate dehydrogenase, found in Mycoplasma pneumoniae (strain ATCC 29342 / M129 / Subtype 1) (Mycoplasmoides pneumoniae).